Consider the following 378-residue polypeptide: MKLKEVTEGKVRIFVPDPTGYMVEGKFDPSWAPVFYNPKMTFNRDLSVIVVSILKPKIIVDALSATGIRGIRYYVESWKSEQLILNDKNPNATSLIQINAKNNGIENAKIYNKDANALLYEVKSDYIDIDPFGSPAPFILSSLNAATRNGIVAFTATDLSPLEGSSPTSCRRKYDAINHKLSSSKELGLRVLIGKIIREAAILEKTVYPLFSFYADYYYRLFVRVENGARKADDNINKHLKYFGECPRCGFQTFVEENCKTKCPVCGEIFSIIGPLYIGPLYSMEFLKRIMDLYSNFNYLTSFNRIQKLLNVIEKEARFKNVFYNISKLASKLKISAIPPIESILECLGDASRTHFAPTGIRTDKEYEEITKCIKSLR.

In terms of domain architecture, Trm1 methyltransferase spans 4-374 (KEVTEGKVRI…KEYEEITKCI (371 aa)). 5 residues coordinate S-adenosyl-L-methionine: Arg-44, Arg-69, Asp-87, Asp-114, and Ala-115. The Zn(2+) site is built by Cys-246, Cys-249, Cys-263, and Cys-266.

The protein belongs to the class I-like SAM-binding methyltransferase superfamily. Trm1 family.

It carries out the reaction guanosine(26) in tRNA + 2 S-adenosyl-L-methionine = N(2)-dimethylguanosine(26) in tRNA + 2 S-adenosyl-L-homocysteine + 2 H(+). Its function is as follows. Dimethylates a single guanine residue at position 26 of a number of tRNAs using S-adenosyl-L-methionine as donor of the methyl groups. The sequence is that of tRNA (guanine(26)-N(2))-dimethyltransferase from Saccharolobus solfataricus (strain ATCC 35092 / DSM 1617 / JCM 11322 / P2) (Sulfolobus solfataricus).